Reading from the N-terminus, the 251-residue chain is Endonuclease NucS (251 aa).

Residues 230-240 (LEPPKKGNEKR) show a composition bias toward basic and acidic residues. The tract at residues 230–251 (LEPPKKGNEKRSKQKTLDFFTP) is disordered.

Belongs to the NucS endonuclease family. Homodimer. Interacts with PCNA.

The protein localises to the cytoplasm. Activity is modulated by PCNA. PCNA increases the binding affinity of NucS towards ssDNA as well as branched DNA substrates carrying either 3' or 5' flaps. PCNA is also required for optimal loading of NucS on its substrates and to direct activity towards ss/dsDNA junction. Functionally, cleaves both 3' and 5' ssDNA extremities of branched DNA structures. Binds to ssDNA. The chain is Endonuclease NucS from Pyrococcus abyssi (strain GE5 / Orsay).